The chain runs to 125 residues: Lectin (125 aa).

The 120-residue stretch at 1–120 (MDYEILFSDE…CGGARRVICE (120 aa)) folds into the C-type lectin domain. 2 cysteine pairs are disulfide-bonded: C21–C119 and C96–C111.

Homodimer.

Functionally, role in the defense system of the organism against microorganisms. This calcium-binding lectin binds galactose. This Polyandrocarpa misakiensis (Tunicate) protein is Lectin.